The primary structure comprises 752 residues: Probable cell surface ferric reductase kap2 (752 aa).

Residues G40 to I60 traverse the membrane as a helical segment. N-linked (GlcNAc...) asparagine glycans are attached at residues N118 and N133. 2 helical membrane-spanning segments follow: residues I157–L177 and P195–L215. The 148-residue stretch at A201–S348 folds into the Ferric oxidoreductase domain. Heme contacts are provided by H237 and H251. 3 helical membrane passes run G241–W261, G281–L301, and Y306–W326. Residues H313 and H327 each contribute to the heme site. Residues F331–V351 traverse the membrane as a helical segment. One can recognise an FAD-binding FR-type domain in the interval Y349–D475. An N-linked (GlcNAc...) asparagine glycan is attached at N357. Position 467–470 (G467–G470) interacts with NADP(+). Residues V482 to I502 traverse the membrane as a helical segment. N-linked (GlcNAc...) asparagine glycosylation is present at N627. C714–G715 is an NADP(+) binding site.

It belongs to the ferric reductase (FRE) family. FAD is required as a cofactor. The cofactor is heme.

It localises to the cell membrane. It catalyses the reaction 2 a Fe(II)-siderophore + NADP(+) + H(+) = 2 a Fe(III)-siderophore + NADPH. Probable cell surface ferric reductase that acts as a negative regulatory factor of growth and development. Involved in kojic acid production through the regulation of kojA expression. The protein is Probable cell surface ferric reductase kap2 of Aspergillus oryzae (strain ATCC 42149 / RIB 40) (Yellow koji mold).